The following is a 94-amino-acid chain: Small ribosomal subunit protein bS16 (94 aa).

Belongs to the bacterial ribosomal protein bS16 family.

The polypeptide is Small ribosomal subunit protein bS16 (Thermosipho africanus (strain TCF52B)).